Reading from the N-terminus, the 594-residue chain is Putative diflavin flavoprotein A 4 (594 aa).

The zinc metallo-hydrolase stretch occupies residues 57 to 250 (RRGTTSNSYL…LTLKMIAPGH (194 aa)). The 139-residue stretch at 279–417 (VALIYASAYG…VCTTSGANFA (139 aa)) folds into the Flavodoxin-like domain. Residues 445–594 (VGRIIGSIGV…IRHRKSGGQY (150 aa)) are flavodoxin-reductase-like.

It in the N-terminal section; belongs to the zinc metallo-hydrolase group 3 family. In the C-terminal section; belongs to the flavodoxin reductase family. Fe cation serves as cofactor.

In terms of biological role, mediates electron transfer from NADH to oxygen, reducing it to water. This modular protein has 3 redox cofactors, in other organisms the same activity requires 2 or 3 proteins. The protein is Putative diflavin flavoprotein A 4 (dfa4) of Synechocystis sp. (strain ATCC 27184 / PCC 6803 / Kazusa).